Reading from the N-terminus, the 117-residue chain is Aspartate 1-decarboxylase (117 aa).

The active-site Schiff-base intermediate with substrate; via pyruvic acid is S25. S25 bears the Pyruvic acid (Ser) mark. T57 contacts substrate. The active-site Proton donor is the Y58. 72–74 (GAA) serves as a coordination point for substrate.

This sequence belongs to the PanD family. Heterooctamer of four alpha and four beta subunits. Pyruvate is required as a cofactor. Post-translationally, is synthesized initially as an inactive proenzyme, which is activated by self-cleavage at a specific serine bond to produce a beta-subunit with a hydroxyl group at its C-terminus and an alpha-subunit with a pyruvoyl group at its N-terminus.

It is found in the cytoplasm. It carries out the reaction L-aspartate + H(+) = beta-alanine + CO2. It functions in the pathway cofactor biosynthesis; (R)-pantothenate biosynthesis; beta-alanine from L-aspartate: step 1/1. Catalyzes the pyruvoyl-dependent decarboxylation of aspartate to produce beta-alanine. The chain is Aspartate 1-decarboxylase from Helicobacter pylori (strain J99 / ATCC 700824) (Campylobacter pylori J99).